Consider the following 379-residue polypeptide: MDLGKPMKNVLVVALLVIFQVCLCQDEVTDNYIGDNTTVDYTLYESVCFKKDVRNFKAWFLPIMYSIICFVGLLGNGLVMLTYIYFKRLKTMTDTYLLNLALADILFLLTLPFWAYSAAKSWVFGVHVCKLIFGIYKISFFSGMLLLLCISIDRYVAIVQAVSAHRHRARVLLISKLSCLGIWMLAIVLSTPEVMYSGIQKSSSEQALRCSLVTEHVEALITIQVAQMVVGFLIPLMAMSFCYLVIIRTLLQARNFERNKAIKVIIAVVVVFVAFQLPYNGVVLAHTVANFNITSGTSCELSKQLNIAYDVTYSLACVRCCVNPFLYAFIGVKFRSDLFKLFKDLGCLSQEQLRQWSFCRHTRRSSMSVEAETTTTFSP.

Residues 1–24 (MDLGKPMKNVLVVALLVIFQVCLC) form the signal peptide. The Extracellular portion of the chain corresponds to 25–59 (QDEVTDNYIGDNTTVDYTLYESVCFKKDVRNFKAW). An N-linked (GlcNAc...) asparagine glycan is attached at Asn-36. Residues 60–86 (FLPIMYSIICFVGLLGNGLVMLTYIYF) form a helical membrane-spanning segment. The Cytoplasmic portion of the chain corresponds to 87-95 (KRLKTMTDT). A helical transmembrane segment spans residues 96-116 (YLLNLALADILFLLTLPFWAY). Residues 117-130 (SAAKSWVFGVHVCK) lie on the Extracellular side of the membrane. Cys-129 and Cys-210 are joined by a disulfide. A helical transmembrane segment spans residues 131-152 (LIFGIYKISFFSGMLLLLCISI). The Cytoplasmic portion of the chain corresponds to 153–170 (DRYVAIVQAVSAHRHRAR). The chain crosses the membrane as a helical span at residues 171 to 191 (VLLISKLSCLGIWMLAIVLST). Residues 192–219 (PEVMYSGIQKSSSEQALRCSLVTEHVEA) lie on the Extracellular side of the membrane. The helical transmembrane segment at 220–247 (LITIQVAQMVVGFLIPLMAMSFCYLVII) threads the bilayer. The Cytoplasmic segment spans residues 248–263 (RTLLQARNFERNKAIK). A helical membrane pass occupies residues 264-289 (VIIAVVVVFVAFQLPYNGVVLAHTVA). Topologically, residues 290 to 314 (NFNITSGTSCELSKQLNIAYDVTYS) are extracellular. A glycan (N-linked (GlcNAc...) asparagine) is linked at Asn-292. The chain crosses the membrane as a helical span at residues 315-332 (LACVRCCVNPFLYAFIGV). Over 333 to 379 (KFRSDLFKLFKDLGCLSQEQLRQWSFCRHTRRSSMSVEAETTTTFSP) the chain is Cytoplasmic.

It belongs to the G-protein coupled receptor 1 family.

The protein resides in the cell membrane. In terms of biological role, receptor for the MIP-3-beta chemokine. This is C-C chemokine receptor type 7 (CCR7) from Bos taurus (Bovine).